Consider the following 311-residue polypeptide: Urease accessory protein UreD (311 aa).

This sequence belongs to the UreD family. UreD, UreF and UreG form a complex that acts as a GTP-hydrolysis-dependent molecular chaperone, activating the urease apoprotein by helping to assemble the nickel containing metallocenter of UreC. The UreE protein probably delivers the nickel.

The protein localises to the cytoplasm. In terms of biological role, required for maturation of urease via the functional incorporation of the urease nickel metallocenter. In Parasynechococcus marenigrum (strain WH8102), this protein is Urease accessory protein UreD.